Reading from the N-terminus, the 517-residue chain is Serine O-succinyltransferase (517 aa).

Residues methionine 1 to arginine 46 constitute a mitochondrion transit peptide. Positions serine 36 to alanine 64 are enriched in polar residues. The tract at residues serine 36–serine 66 is disordered. Residues asparagine 134–glutamine 386 form the AB hydrolase-1 domain. Residues glycine 141–alanine 144 are important for substrate specificity. Serine 238 acts as the Nucleophile in catalysis. Arginine 307 contributes to the substrate binding site. The interval glutamine 413 to serine 436 is disordered. Residues glutamine 416–serine 436 show a composition bias toward low complexity. Residues aspartate 461 and histidine 498 contribute to the active site. Aspartate 499 is a binding site for substrate.

Belongs to the AB hydrolase superfamily. MetX family.

It localises to the mitochondrion. It catalyses the reaction succinyl-CoA + L-serine = O-succinyl-L-serine + CoA. It functions in the pathway amino-acid biosynthesis; L-cysteine biosynthesis; L-cysteine from L-serine: step 1/2. Transfers a succinyl group from succinyl-CoA to L-serine, forming succinyl-L-serine. Also has weak serine acetyl transferase activity and homoserine succinyl transferase activity. This Emericella nidulans (strain FGSC A4 / ATCC 38163 / CBS 112.46 / NRRL 194 / M139) (Aspergillus nidulans) protein is Serine O-succinyltransferase.